The following is a 159-amino-acid chain: Protein UXT homolog (159 aa).

It belongs to the UXT family.

This is Protein UXT homolog from Nematostella vectensis (Starlet sea anemone).